A 462-amino-acid polypeptide reads, in one-letter code: Kinetochore protein Nuf2-A (462 aa).

Coiled coils occupy residues 143 to 277 (SSYK…DKCD) and 308 to 461 (EIHR…RLSR). The disordered stretch occupies residues 239 to 259 (RMKSQIVESPEQRKSKTERMK). Over residues 248-259 (PEQRKSKTERMK) the composition is skewed to basic and acidic residues.

The protein belongs to the NUF2 family. Component of the NDC80 complex, which is composed of ndc80, cdca1, spbc24 and spbc25. The NDC80 complex interacts with mis12 and zwint.

Its subcellular location is the nucleus. It is found in the chromosome. It localises to the centromere. The protein localises to the kinetochore. Functionally, acts as a component of the essential kinetochore-associated NDC80 complex, which is required for chromosome segregation and spindle checkpoint activity. Required for kinetochore integrity and the organization of stable microtubule binding sites in the outer plate of the kinetochore. The NDC80 complex synergistically enhances the affinity of the SKA1 complex for microtubules and may allow the NDC80 complex to track depolymerizing microtubules. The protein is Kinetochore protein Nuf2-A (nuf2-a) of Xenopus laevis (African clawed frog).